A 248-amino-acid polypeptide reads, in one-letter code: Triosephosphate isomerase (248 aa).

Substrate is bound at residue 9-11 (NWK). Residue His94 is the Electrophile of the active site. Residue Glu166 is the Proton acceptor of the active site. Substrate is bound by residues Gly172, Ser211, and 232–233 (GG).

Belongs to the triosephosphate isomerase family. As to quaternary structure, homodimer.

It is found in the cytoplasm. It catalyses the reaction D-glyceraldehyde 3-phosphate = dihydroxyacetone phosphate. The protein operates within carbohydrate biosynthesis; gluconeogenesis. It functions in the pathway carbohydrate degradation; glycolysis; D-glyceraldehyde 3-phosphate from glycerone phosphate: step 1/1. Involved in the gluconeogenesis. Catalyzes stereospecifically the conversion of dihydroxyacetone phosphate (DHAP) to D-glyceraldehyde-3-phosphate (G3P). The protein is Triosephosphate isomerase of Ruthia magnifica subsp. Calyptogena magnifica.